We begin with the raw amino-acid sequence, 302 residues long: Vacuolar iron transporter (302 aa).

Topologically, residues 1–70 (MPASGAGYAG…HTNTSSDYVK (70 aa)) are cytoplasmic. A helical transmembrane segment spans residues 71 to 91 (AVVFGGLDGIVTIFAIVAGCV). Residues 92–99 (GADLSCSQ) lie on the Vacuolar side of the membrane. Residues 100–120 (VLMVGLGNLLADAISMGFGEY) form a helical membrane-spanning segment. The Cytoplasmic portion of the chain corresponds to 121–211 (VSAAAEKDFV…IKRGLVMFTA (91 aa)). Fe cation contacts are provided by Glu137, Glu140, Glu148, Glu151, Met185, and Glu189. Residues 212 to 232 (FCFFGLLPLAGFIGWVAAFGL) traverse the membrane as a helical segment. Topologically, residues 233–235 (GAE) are vacuolar. Residues 236 to 256 (ADMAFLMACVVSIMTLFILGF) form a helical membrane-spanning segment. Residues 257–276 (SKGKFVGQNPTKSACLMAMN) lie on the Cytoplasmic side of the membrane. The helical transmembrane segment at 277 to 297 (GGCAGTVAYGVGSLLQLVVGA) threads the bilayer. Over 298 to 302 (NLTAA) the chain is Vacuolar.

Belongs to the CCC1 family.

It localises to the vacuole membrane. The enzyme catalyses Fe(2+)(in) = Fe(2+)(out). Functionally, vacuolar iron transporter involved in the transfer of iron ions from the cytosol to the vacuole for intracellular iron storage. Plays an essential role in detoxification of excess iron. Important for parasite survival within macrophages and parasite virulence in vivo. This is Vacuolar iron transporter from Toxoplasma gondii (strain ATCC 50861 / VEG).